Consider the following 500-residue polypeptide: Glycerol kinase (500 aa).

Residue Thr-13 coordinates ADP. Residues Thr-13, Thr-14, and Ser-15 each coordinate ATP. A sn-glycerol 3-phosphate-binding site is contributed by Thr-13. Arg-17 lines the ADP pocket. 3 residues coordinate sn-glycerol 3-phosphate: Arg-83, Glu-84, and Tyr-135. Positions 83, 84, and 135 each coordinate glycerol. Residue His-231 is modified to Phosphohistidine; by HPr. Asp-245 provides a ligand contact to sn-glycerol 3-phosphate. Glycerol-binding residues include Asp-245 and Gln-246. Residues Thr-267 and Gly-310 each coordinate ADP. Residues Thr-267, Gly-310, Gln-314, and Gly-411 each contribute to the ATP site. Positions 411 and 415 each coordinate ADP.

The protein belongs to the FGGY kinase family. As to quaternary structure, homotetramer and homodimer (in equilibrium). The phosphoenolpyruvate-dependent sugar phosphotransferase system (PTS), including enzyme I, and histidine-containing protein (HPr) are required for the phosphorylation, which leads to the activation of the enzyme.

It carries out the reaction glycerol + ATP = sn-glycerol 3-phosphate + ADP + H(+). Its pathway is polyol metabolism; glycerol degradation via glycerol kinase pathway; sn-glycerol 3-phosphate from glycerol: step 1/1. With respect to regulation, activated by phosphorylation and inhibited by fructose 1,6-bisphosphate (FBP). Key enzyme in the regulation of glycerol uptake and metabolism. Catalyzes the phosphorylation of glycerol to yield sn-glycerol 3-phosphate. This Oceanobacillus iheyensis (strain DSM 14371 / CIP 107618 / JCM 11309 / KCTC 3954 / HTE831) protein is Glycerol kinase.